Consider the following 212-residue polypeptide: Golgi SNAP receptor complex member 2 (212 aa).

Position 1 is an N-acetylmethionine (Met1). Over 1-190 (MEPLYQQTHK…LIEKRAFQDK (190 aa)) the chain is Cytoplasmic. The stretch at 61-107 (NRRQNAKLRVDQLKYDVQHLQTALRNFQHRRQAKEQQERQRDELLSR) forms a coiled coil. The IxM motif; signal for cargo packaging into COPII-coated vesicles motif lies at 118–120 (IPM). A helical; Anchor for type IV membrane protein membrane pass occupies residues 191–211 (YFMIGGMLLTCAVMFLVVQYL). A topological domain (vesicular) is located at residue Thr212.

The protein belongs to the GOSR2 family. As to quaternary structure, part of a unique SNARE complex composed of the Golgi SNAREs GOSR1, STX5 and YKT6. Interacts with BET1.

The protein resides in the golgi apparatus. Its subcellular location is the cis-Golgi network membrane. The protein localises to the golgi apparatus membrane. It is found in the endoplasmic reticulum membrane. Involved in transport of proteins from the cis/medial-Golgi to the trans-Golgi network. The protein is Golgi SNAP receptor complex member 2 (Gosr2) of Rattus norvegicus (Rat).